An 885-amino-acid chain; its full sequence is DDT domain-containing protein DDB_G0282237 (885 aa).

The region spanning 20–125 is the WAC domain; sequence EEYFVIKFTK…GEIVSFKKAN (106 aa). Disordered regions lie at residues 141–184, 201–264, and 367–431; these read ESDE…INAL, DDEN…SVRK, and LEDT…KENE. Residues 154-180 are compositionally biased toward low complexity; that stretch reads SSSSSSTTTTTTTPTTPPTTTTTTSSS. Basic and acidic residues predominate over residues 210–264; the sequence is KNNGDTSSDKKGEKEKEKEKEKEKEKEKEKEKEKEKEKEKEKEKEKDSDTKSVRK. Positions 217–260 form a coiled coil; it reads SDKKGEKEKEKEKEKEKEKEKEKEKEKEKEKEKEKEKEKDSDTK. A compositionally biased stretch (acidic residues) spans 367-379; the sequence is LEDTEEESVDIES. Positions 380 to 396 are enriched in low complexity; that stretch reads NDNSNSNGNSNSNNNLD. The 61-residue stretch at 443-503 folds into the DDT domain; it reads SNTFGDFLMV…MKTIFTLPSY (61 aa). Residues 530–565 adopt a coiled-coil conformation; the sequence is FQNEVKRIAIEEKEKQEKLKQLEEQNIRMLNLANEL. Disordered regions lie at residues 562–632 and 707–744; these read ANEL…WKEE and KQDDAAAAAEDDDENNEDDEEQQQQEVKKPKGAKQKKP. Residues 567 to 577 are compositionally biased toward acidic residues; the sequence is GSDDEDDEMKL. Over residues 578-603 the composition is skewed to basic and acidic residues; it reads DEDGNEIKKDVEMKDNDGTKDTKKDD. 2 coiled-coil regions span residues 593-628 and 674-782; these read NDGTKDTKKDDEENEEEEEEEEEEEEEVASDEGEEE and ASEK…RDRN. Acidic residues-rich tracts occupy residues 604–631 and 715–729; these read EENEEEEEEEEEEEEEVASDEGEEEWKE and AEDDDENNEDDEEQQ.

The protein resides in the nucleus. This chain is DDT domain-containing protein DDB_G0282237, found in Dictyostelium discoideum (Social amoeba).